Here is a 245-residue protein sequence, read N- to C-terminus: 1-(5-phosphoribosyl)-5-[(5-phosphoribosylamino)methylideneamino] imidazole-4-carboxamide isomerase (245 aa).

The Proton acceptor role is filled by Asp-8. Asp-129 functions as the Proton donor in the catalytic mechanism.

Belongs to the HisA/HisF family.

Its subcellular location is the cytoplasm. It carries out the reaction 1-(5-phospho-beta-D-ribosyl)-5-[(5-phospho-beta-D-ribosylamino)methylideneamino]imidazole-4-carboxamide = 5-[(5-phospho-1-deoxy-D-ribulos-1-ylimino)methylamino]-1-(5-phospho-beta-D-ribosyl)imidazole-4-carboxamide. It participates in amino-acid biosynthesis; L-histidine biosynthesis; L-histidine from 5-phospho-alpha-D-ribose 1-diphosphate: step 4/9. The polypeptide is 1-(5-phosphoribosyl)-5-[(5-phosphoribosylamino)methylideneamino] imidazole-4-carboxamide isomerase (Heliobacterium modesticaldum (strain ATCC 51547 / Ice1)).